Consider the following 392-residue polypeptide: Phosphoglycerate kinase (392 aa).

Substrate is bound by residues 21 to 23 (DFN), Arg36, 59 to 62 (HLGR), Arg118, and Arg151. ATP is bound by residues Lys202, Glu321, and 347 to 350 (GGDS).

It belongs to the phosphoglycerate kinase family. Monomer.

Its subcellular location is the cytoplasm. The catalysed reaction is (2R)-3-phosphoglycerate + ATP = (2R)-3-phospho-glyceroyl phosphate + ADP. The protein operates within carbohydrate degradation; glycolysis; pyruvate from D-glyceraldehyde 3-phosphate: step 2/5. In Symbiobacterium thermophilum (strain DSM 24528 / JCM 14929 / IAM 14863 / T), this protein is Phosphoglycerate kinase.